A 141-amino-acid polypeptide reads, in one-letter code: Hemoglobin subunit alpha-D (141 aa).

The Globin domain occupies 1–141 (MLTADDKKIL…VAAVLAEKYR (141 aa)). 2 residues coordinate heme b: histidine 58 and histidine 87.

It belongs to the globin family. As to quaternary structure, heterotetramer of two alpha-D chains and two beta chains. Red blood cells.

Involved in oxygen transport from the lung to the various peripheral tissues. The protein is Hemoglobin subunit alpha-D (HBAD) of Branta canadensis (Canada goose).